Consider the following 42-residue polypeptide: Photosystem I reaction center subunit IX (42 aa).

A helical transmembrane segment spans residues 7-27 (YLSVAPVLSTLWFGSLAGLLI).

Belongs to the PsaJ family.

It is found in the plastid. Its subcellular location is the chloroplast thylakoid membrane. Its function is as follows. May help in the organization of the PsaE and PsaF subunits. This is Photosystem I reaction center subunit IX from Daucus carota (Wild carrot).